A 366-amino-acid polypeptide reads, in one-letter code: Zinc finger protein ubi-d4 B (366 aa).

Disordered stretches follow at residues 41 to 94 (ASAP…DGSS) and 140 to 167 (DDLDDEDYEEDTPKRRKGKSKGKGIGGA). Over residues 76 to 86 (PDPEQMLKKEG) the composition is skewed to basic and acidic residues. Residues 140–149 (DDLDDEDYEE) are compositionally biased toward acidic residues. The C2H2-type zinc-finger motif lies at 183–206 (YACDICGKRYKNRPGLSYHYAHSH). The tract at residues 211-243 (EGAGAEDKEDSQPPTPIMHRSEEQKSKKGPDGL) is disordered. A compositionally biased stretch (basic and acidic residues) spans 229 to 240 (HRSEEQKSKKGP). 2 PHD-type zinc fingers span residues 247 to 307 (NNYC…CKCC) and 304 to 354 (CKCC…CLDL).

Belongs to the requiem/DPF family.

It is found in the cytoplasm. It localises to the nucleus. May be a transcription factor required for the apoptosis response following survival factor withdrawal from myeloid cells. Might also have a role in the development and maturation of lymphoid cells. The chain is Zinc finger protein ubi-d4 B (req-b) from Xenopus laevis (African clawed frog).